The chain runs to 350 residues: Hydroxymethylglutaryl-CoA synthase (350 aa).

Asp30 is a (3S)-3-hydroxy-3-methylglutaryl-CoA binding site. Catalysis depends on Glu82, which acts as the Proton donor/acceptor. (3S)-3-hydroxy-3-methylglutaryl-CoA is bound by residues Cys114, Ser155, Thr203, and His236. The active-site Acyl-thioester intermediate is Cys114. Catalysis depends on His236, which acts as the Proton donor/acceptor. Arg241 contributes to the CoA binding site. (3S)-3-hydroxy-3-methylglutaryl-CoA contacts are provided by Arg245, Asn268, and Ser298.

The protein belongs to the thiolase-like superfamily. Archaeal HMG-CoA synthase family. As to quaternary structure, interacts with acetoacetyl-CoA thiolase that catalyzes the precedent step in the pathway and with a DUF35 protein. The acetoacetyl-CoA thiolase/HMG-CoA synthase complex channels the intermediate via a fused CoA-binding site, which allows for efficient coupling of the endergonic thiolase reaction with the exergonic HMGCS reaction.

It carries out the reaction acetoacetyl-CoA + acetyl-CoA + H2O = (3S)-3-hydroxy-3-methylglutaryl-CoA + CoA + H(+). It functions in the pathway metabolic intermediate biosynthesis; (R)-mevalonate biosynthesis; (R)-mevalonate from acetyl-CoA: step 2/3. In terms of biological role, catalyzes the condensation of acetyl-CoA with acetoacetyl-CoA to form 3-hydroxy-3-methylglutaryl-CoA (HMG-CoA). Functions in the mevalonate (MVA) pathway leading to isopentenyl diphosphate (IPP), a key precursor for the biosynthesis of isoprenoid compounds that are building blocks of archaeal membrane lipids. In Pyrobaculum calidifontis (strain DSM 21063 / JCM 11548 / VA1), this protein is Hydroxymethylglutaryl-CoA synthase.